The primary structure comprises 394 residues: Large ribosomal subunit protein mL44 (394 aa).

The transit peptide at 1–21 (MFRHVAQNLGSRNTSIQSYRL) directs the protein to the mitochondrion.

This sequence belongs to the ribonuclease III family. Mitochondrion-specific ribosomal protein mL44 subfamily. In terms of assembly, component of the mitochondrial large ribosomal subunit (mt-LSU).

It is found in the mitochondrion. In terms of biological role, component of the mitochondrial ribosome. May have a function in the assembly/stability of nascent mitochondrial polypeptides exiting the ribosome. This chain is Large ribosomal subunit protein mL44, found in Caenorhabditis elegans.